The following is a 156-amino-acid chain: Small ribosomal subunit protein uS7cz/uS7cy (156 aa).

It belongs to the universal ribosomal protein uS7 family. In terms of assembly, part of the 30S ribosomal subunit.

It is found in the plastid. The protein resides in the chloroplast. One of the primary rRNA binding proteins, it binds directly to 16S rRNA where it nucleates assembly of the head domain of the 30S subunit. The protein is Small ribosomal subunit protein uS7cz/uS7cy (rps7-A) of Triticum aestivum (Wheat).